Consider the following 288-residue polypeptide: Sulfhydrogenase 2 subunit gamma (288 aa).

Residues 4–103 (YRSYDARIIE…RGPYGNGFPM (100 aa)) enclose the FAD-binding FR-type domain. [2Fe-2S] cluster is bound by residues Cys250, Cys255, Cys258, and Cys270.

Dimer of heterotetramer of alpha, beta, gamma and delta subunits. The nickel-containing alpha and delta subunits constitute the hydrogenase activity. The beta and gamma subunits (flavin-containing dimer) constitute the sulfur reductase activity. It depends on FAD as a cofactor. [2Fe-2S] cluster is required as a cofactor.

It is found in the cytoplasm. It carries out the reaction n sulfur + H2 = (n-1) sulfur + hydrogen sulfide + H(+). In terms of biological role, part of a bifunctional enzyme complex that functions as a hydrogen-evolving hydrogenase with sulfur-reducing activity. May play a role in hydrogen cycling during fermentative growth. Activity exhibited with NAD in addition to NADPH. The beta and gamma subunits form the sulfur-reducing component that catalyzes the cytoplasmic production of hydrogen sulfide in the presence of elemental sulfur. In Pyrococcus furiosus (strain ATCC 43587 / DSM 3638 / JCM 8422 / Vc1), this protein is Sulfhydrogenase 2 subunit gamma.